A 174-amino-acid chain; its full sequence is MEGTTVIAVRHQGRVALAGDGQVTFGNTVMKHKARKVRRLYQDRVLAGFAGSVADAFTLFEKFEAKLETYHGNLQRAAVELGKEWRTDRFLRRLEALLVVADKEHLLIISGNGEIVEPDDGIAAIGSGGPYALAAARALVAHTSMTAGEIAREAMNIAASICIYTNNNIIVEEL.

Residue threonine 4 is part of the active site. Alanine 159, cysteine 162, and threonine 165 together coordinate Na(+).

It belongs to the peptidase T1B family. HslV subfamily. In terms of assembly, a double ring-shaped homohexamer of HslV is capped on each side by a ring-shaped HslU homohexamer. The assembly of the HslU/HslV complex is dependent on binding of ATP.

It localises to the cytoplasm. The catalysed reaction is ATP-dependent cleavage of peptide bonds with broad specificity.. Its activity is regulated as follows. Allosterically activated by HslU binding. Protease subunit of a proteasome-like degradation complex believed to be a general protein degrading machinery. The protein is ATP-dependent protease subunit HslV of Moorella thermoacetica (strain ATCC 39073 / JCM 9320).